We begin with the raw amino-acid sequence, 425 residues long: Protein translocase subunit SecY (425 aa).

Helical transmembrane passes span 15-35 (LLSLGILLFIRMGTFLPVPGI), 62-82 (TVVVGLFTLNIFPYINASIIM), 113-131 (LLTLGWSLIQSTSVAFYLK), 139-159 (LVLAFEIVIWLTTGAMIVLWL), 168-188 (LGNGPSLLIYTNIVSSLPGFV), 201-221 (IGSWLLSGFVLFVALYGIVLL), 266-286 (PIILTTAVLVIPTFIYNLGLL), 304-324 (IIYWVSYFVLILLFSLFYSTI), 364-384 (LLGAIMLALLATLPNIIQAIL), and 385-405 (SLSGFTNLGTTSLLILVGVIL).

It belongs to the SecY/SEC61-alpha family. As to quaternary structure, component of the plastid Sec protein translocase complex, which is composed of at least SecY, SecE and SecG.

It is found in the plastid. The protein resides in the chloroplast thylakoid membrane. Functionally, the central subunit of the protein translocation channel SecYE. Consists of two halves formed by TMs 1-5 and 6-10. These two domains form a lateral gate at the front which open onto the bilayer between TMs 2 and 7, and are clamped together by SecE at the back. The channel is closed by both a pore ring composed of hydrophobic SecY resides and a short helix (helix 2A) on the extracellular side of the membrane which forms a plug. In Trieres chinensis (Marine centric diatom), this protein is Protein translocase subunit SecY.